We begin with the raw amino-acid sequence, 480 residues long: ATP synthase subunit beta (480 aa).

158–165 (GGAGVGKT) contributes to the ATP binding site.

Belongs to the ATPase alpha/beta chains family. F-type ATPases have 2 components, CF(1) - the catalytic core - and CF(0) - the membrane proton channel. CF(1) has five subunits: alpha(3), beta(3), gamma(1), delta(1), epsilon(1). CF(0) has three main subunits: a(1), b(2) and c(9-12). The alpha and beta chains form an alternating ring which encloses part of the gamma chain. CF(1) is attached to CF(0) by a central stalk formed by the gamma and epsilon chains, while a peripheral stalk is formed by the delta and b chains.

It is found in the cell inner membrane. The catalysed reaction is ATP + H2O + 4 H(+)(in) = ADP + phosphate + 5 H(+)(out). Produces ATP from ADP in the presence of a proton gradient across the membrane. The catalytic sites are hosted primarily by the beta subunits. The polypeptide is ATP synthase subunit beta (Acidobacterium capsulatum (strain ATCC 51196 / DSM 11244 / BCRC 80197 / JCM 7670 / NBRC 15755 / NCIMB 13165 / 161)).